The chain runs to 61 residues: Small ribosomal subunit protein uS14B (61 aa).

Zn(2+)-binding residues include cysteine 24, cysteine 27, cysteine 40, and cysteine 43.

The protein belongs to the universal ribosomal protein uS14 family. Zinc-binding uS14 subfamily. In terms of assembly, part of the 30S ribosomal subunit. Contacts proteins S3 and S10. The cofactor is Zn(2+).

Its function is as follows. Binds 16S rRNA, required for the assembly of 30S particles and may also be responsible for determining the conformation of the 16S rRNA at the A site. The chain is Small ribosomal subunit protein uS14B from Listeria welshimeri serovar 6b (strain ATCC 35897 / DSM 20650 / CCUG 15529 / CIP 8149 / NCTC 11857 / SLCC 5334 / V8).